Consider the following 707-residue polypeptide: Protein kinase C theta type (707 aa).

The C2 domain occupies 1-107 (MSPFLRIGLS…KNNGRTEIWL (107 aa)). Tyr-90 is subject to Phosphotyrosine; by LCK. The Phorbol-ester/DAG-type 1 zinc finger occupies 159–209 (CHEFTATFFPQPTFCSVCHEFVWGLNKQGYQCRQCNAAIHKKCIDKVIAKC). Thr-219 carries the phosphothreonine; by autocatalysis modification. The Phorbol-ester/DAG-type 2 zinc finger occupies 231–281 (PHRFKVYNYKSPTFCEHCGTLLWGLARQGLKCDACGMNVHHRCQTKVANLC). Positions 327 to 365 (ETRPPCVPTPGKREPQGISWDSPLDGSNKSAGPPEPEVS) are disordered. At Ser-348 the chain carries Phosphoserine. A Protein kinase domain is found at 380-634 (FILHKMLGKG…RGDIRQHPLF (255 aa)). Residues 386 to 394 (LGKGSFGKV) and Lys-409 contribute to the ATP site. Asp-504 serves as the catalytic Proton acceptor. Phosphothreonine; by PDPK1 is present on Thr-538. The 72-residue stretch at 635-706 (REINWEELER…INPGMETLIC (72 aa)) folds into the AGC-kinase C-terminal domain. Phosphoserine; by autocatalysis is present on Ser-676. A Phosphoserine modification is found at Ser-685. Position 695 is a phosphoserine; by autocatalysis (Ser-695).

This sequence belongs to the protein kinase superfamily. AGC Ser/Thr protein kinase family. PKC subfamily. As to quaternary structure, part of a membrane raft complex composed at least of BCL10, CARD11, MALT1 and IKBKB. Interacts with GLRX3 (via N-terminus). Interacts with ECT2. Interacts with CCDC88A/GIV; the interaction leads to phosphorylation of CCDC88A and inhibition of its guanine nucleotide exchange factor activity. Interacts with CD28. It depends on Mg(2+) as a cofactor. Autophosphorylation at Thr-219 is required for targeting to the TCR and cellular function of PRKCQ upon antigen receptor ligation. Following TCR stimulation, phosphorylated at Tyr-90 and Ser-685. As to expression, T-lymphocytes and skeletal muscle.

It localises to the cytoplasm. It is found in the cell membrane. The catalysed reaction is L-seryl-[protein] + ATP = O-phospho-L-seryl-[protein] + ADP + H(+). The enzyme catalyses L-threonyl-[protein] + ATP = O-phospho-L-threonyl-[protein] + ADP + H(+). With respect to regulation, novel PKCs (PRKCD, PRKCE, PRKCH and PRKCQ) are calcium-insensitive, but activated by diacylglycerol (DAG) and phosphatidylserine. Three specific sites; Thr-538 (activation loop of the kinase domain), Ser-676 (turn motif) and Ser-695 (hydrophobic region), need to be phosphorylated for its full activation. Its function is as follows. Calcium-independent, phospholipid- and diacylglycerol (DAG)-dependent serine/threonine-protein kinase that mediates non-redundant functions in T-cell receptor (TCR) signaling, including T-cells activation, proliferation, differentiation and survival, by mediating activation of multiple transcription factors such as NF-kappa-B, JUN, NFATC1 and NFATC2. In TCR-CD3/CD28-co-stimulated T-cells, is required for the activation of NF-kappa-B and JUN, which in turn are essential for IL2 production, and participates in the calcium-dependent NFATC1 and NFATC2 transactivation. Mediates the activation of the canonical NF-kappa-B pathway (NFKB1) by direct phosphorylation of CARD11 on several serine residues, inducing CARD11 association with lipid rafts and recruitment of the BCL10-MALT1 complex, which then activates IKK complex, resulting in nuclear translocation and activation of NFKB1. May also play an indirect role in activation of the non-canonical NF-kappa-B (NFKB2) pathway. In the signaling pathway leading to JUN activation, acts by phosphorylating the mediator STK39/SPAK and may not act through MAP kinases signaling. Plays a critical role in TCR/CD28-induced NFATC1 and NFATC2 transactivation by participating in the regulation of reduced inositol 1,4,5-trisphosphate generation and intracellular calcium mobilization. After costimulation of T-cells through CD28 can phosphorylate CBLB and is required for the ubiquitination and subsequent degradation of CBLB, which is a prerequisite for the activation of TCR. During T-cells differentiation, plays an important role in the development of T-helper 2 (Th2) cells following immune and inflammatory responses, and, in the development of inflammatory autoimmune diseases, is necessary for the activation of IL17-producing Th17 cells. May play a minor role in Th1 response. Upon TCR stimulation, mediates T-cell protective survival signal by phosphorylating BAD, thus protecting T-cells from BAD-induced apoptosis, and by up-regulating BCL-X(L)/BCL2L1 levels through NF-kappa-B and JUN pathways. In platelets, regulates signal transduction downstream of the ITGA2B, CD36/GP4, F2R/PAR1 and F2RL3/PAR4 receptors, playing a positive role in 'outside-in' signaling and granule secretion signal transduction. May relay signals from the activated ITGA2B receptor by regulating the uncoupling of WASP and WIPF1, thereby permitting the regulation of actin filament nucleation and branching activity of the Arp2/3 complex. May mediate inhibitory effects of free fatty acids on insulin signaling by phosphorylating IRS1, which in turn blocks IRS1 tyrosine phosphorylation and downstream activation of the PI3K/AKT pathway. Phosphorylates MSN (moesin) in the presence of phosphatidylglycerol or phosphatidylinositol. Phosphorylates PDPK1 at 'Ser-504' and 'Ser-532' and negatively regulates its ability to phosphorylate PKB/AKT1. Phosphorylates CCDC88A/GIV and inhibits its guanine nucleotide exchange factor activity. Phosphorylates and activates LRRK1, which phosphorylates RAB proteins involved in intracellular trafficking. The protein is Protein kinase C theta type (Prkcq) of Mus musculus (Mouse).